The primary structure comprises 202 residues: Tumor necrosis factor alpha-induced protein 8-like protein 3 (202 aa).

Residues 1-10 (MDTDSGDLSE) show a composition bias toward acidic residues. The disordered stretch occupies residues 1–24 (MDTDSGDLSEGELSPGPEQFSSKS).

Belongs to the TNFAIP8 family.

The protein resides in the cytoplasm. The protein localises to the cell membrane. In terms of biological role, may act as a lipid transfer protein. This chain is Tumor necrosis factor alpha-induced protein 8-like protein 3 (tnfaip8l3), found in Xenopus laevis (African clawed frog).